A 549-amino-acid chain; its full sequence is Glucose-6-phosphate isomerase (549 aa).

Residue E353 is the Proton donor of the active site. Active-site residues include H384 and K513.

It belongs to the GPI family.

The protein resides in the cytoplasm. It carries out the reaction alpha-D-glucose 6-phosphate = beta-D-fructose 6-phosphate. It functions in the pathway carbohydrate biosynthesis; gluconeogenesis. The protein operates within carbohydrate degradation; glycolysis; D-glyceraldehyde 3-phosphate and glycerone phosphate from D-glucose: step 2/4. Its function is as follows. Catalyzes the reversible isomerization of glucose-6-phosphate to fructose-6-phosphate. In Brucella abortus (strain S19), this protein is Glucose-6-phosphate isomerase.